Consider the following 156-residue polypeptide: Ribosome maturation factor RimP (156 aa).

Belongs to the RimP family.

The protein resides in the cytoplasm. Its function is as follows. Required for maturation of 30S ribosomal subunits. The polypeptide is Ribosome maturation factor RimP (Fusobacterium nucleatum subsp. nucleatum (strain ATCC 25586 / DSM 15643 / BCRC 10681 / CIP 101130 / JCM 8532 / KCTC 2640 / LMG 13131 / VPI 4355)).